The following is a 62-amino-acid chain: Large ribosomal subunit protein eL37 (62 aa).

The Zn(2+) site is built by C20, C23, C35, and C38. The C4-type zinc finger occupies 20 to 38; sequence CRRCGRKAFNVKKGYCAAC.

This sequence belongs to the eukaryotic ribosomal protein eL37 family. It depends on Zn(2+) as a cofactor.

Its function is as follows. Binds to the 23S rRNA. The protein is Large ribosomal subunit protein eL37 (rpl37e) of Pyrococcus abyssi (strain GE5 / Orsay).